We begin with the raw amino-acid sequence, 300 residues long: Cation-efflux pump FieF (300 aa).

A helical membrane pass occupies residues 24-44 (LLIKIFAWWYTGSVSILAALV). Asp45 and Asp49 together coordinate Zn(2+). The next 2 helical transmembrane spans lie at 82–102 (AALA…LTSI) and 114–134 (PGVG…LVTF). Residues His153 and Asp157 each contribute to the Zn(2+) site. The next 2 helical transmembrane spans lie at 156 to 176 (SDVM…YGWH) and 178 to 198 (ADAL…LRMG).

It belongs to the cation diffusion facilitator (CDF) transporter (TC 2.A.4) family. FieF subfamily. Homodimer.

It localises to the cell inner membrane. It catalyses the reaction Zn(2+)(in) + H(+)(out) = Zn(2+)(out) + H(+)(in). The catalysed reaction is Cd(2+)(in) + H(+)(out) = Cd(2+)(out) + H(+)(in). The enzyme catalyses Fe(2+)(in) + H(+)(out) = Fe(2+)(out) + H(+)(in). Divalent metal cation transporter which exports Zn(2+), Cd(2+) and possibly Fe(2+). May be involved in zinc and iron detoxification by efflux. This Salmonella schwarzengrund (strain CVM19633) protein is Cation-efflux pump FieF.